The sequence spans 627 residues: Pentatricopeptide repeat-containing protein At2g35030, mitochondrial (627 aa).

The N-terminal 44 residues, Met-1–Pro-44, are a transit peptide targeting the mitochondrion. PPR repeat units lie at residues Arg-45–Arg-75, Asp-76–Val-110, Thr-111–Arg-138, Asn-139–Ser-173, Trp-174–Arg-200, Asp-201–Ser-235, Trp-236–Arg-262, Asp-263–Lys-293, Asn-294–Lys-328, Asn-330–Ser-360, Asn-365–Gln-396, Asp-398–Pro-432, Ser-433–Pro-467, and Arg-469–Arg-499. A type E motif region spans residues Phe-504–Gly-579. A type E(+) motif region spans residues Lys-580–Arg-610.

The protein belongs to the PPR family. PCMP-E subfamily.

It localises to the mitochondrion. This chain is Pentatricopeptide repeat-containing protein At2g35030, mitochondrial (PCMP-E15), found in Arabidopsis thaliana (Mouse-ear cress).